A 228-amino-acid chain; its full sequence is MEIEYENEYVHQVYDKIATHFSDTRYKPWPVVEKFLKSLPLGSVGVDIGCGNGKYQKVNPNVYMIGSDRCVKLVKIASNLGPMVISDGLHVPHPSNRFDFALSIAVIHHFSNENRRLQAVQEVLRPLVKGGKALFFVWALEQKNSRRGFSEDGPQDVYVPWILKRQYEYPNAKPEELKGHDPAENIAYQRYYHLFRKGELNELVETAGGSILEHGYDRDNWWVIAEKN.

The protein localises to the cytoplasm. It is found in the nucleus. The enzyme catalyses 5-(carboxymethyl)uridine(34) in tRNA + S-adenosyl-L-methionine = 5-(2-methoxy-2-oxoethyl)uridine(34) in tRNA + S-adenosyl-L-homocysteine. In terms of biological role, required for the methylation of the wobble bases at position 34 in tRNA. Appears to have a role in stress-response. This chain is tRNA (carboxymethyluridine(34)-5-O)-methyltransferase (trm9), found in Schizosaccharomyces pombe (strain 972 / ATCC 24843) (Fission yeast).